Reading from the N-terminus, the 506-residue chain is Xaa-Pro aminopeptidase 3 (506 aa).

The transit peptide at 1–31 (MLSLLSTPRLVPVIARLRGLSGCMSCLQRRY) directs the protein to the mitochondrion. The interval 54 to 79 (HPHLLRPGEVTPGLSQVEYALRRHKL) is interaction with TNFRSF1B. The substrate site is built by Tyr300, Asp331, Asp342, His423, His430, Glu450, and Glu474. Mn(2+) is bound by residues Asp331, Asp342, and His423. Mn(2+) contacts are provided by Glu450 and Glu474.

It belongs to the peptidase M24B family. In terms of assembly, homodimer. Interacts with TNFRSF1B/TNFR2 (activated) and TRAF2. The cofactor is Mn(2+). Expressed in the kidney, specifically in intercalated cells, but not in principal cells, of the distal convoluted tubule and cortical collecting duct (at protein level).

It is found in the mitochondrion. Its subcellular location is the cytoplasm. It carries out the reaction Release of any N-terminal amino acid, including proline, that is linked to proline, even from a dipeptide or tripeptide.. Its function is as follows. Catalyzes the removal of a penultimate prolyl residue from the N-termini of peptides, such as Leu-Pro-Ala. Also shows low activity towards peptides with Ala or Ser at the P1 position. Promotes TNFRSF1B-mediated phosphorylation of MAPK8/JNK1 and MAPK9/JNK2, suggesting a function as an adapter protein for TNFRSF1B; the effect is independent of XPNPEP3 peptidase activity. May inhibit apoptotic cell death induced via TNF-TNFRSF1B signaling. This chain is Xaa-Pro aminopeptidase 3 (Xpnpep3), found in Rattus norvegicus (Rat).